The primary structure comprises 205 residues: MLSKCRFVAGVQDKHSLPDFQVPEVAFAGRSNVGKSSLINAVTKNKKGARVSSNPGSTRQINFYLNEGALALVDLPGYGYSKASKESASSYMSLVEHYLLTREALHRLVLLIDSKVGLKEVDMDFISWLEERCIHYSLVLTKIDRLACTEFNDVLSAVQSRVKGCCMLLHPIIGTSSKSGKGIKELVHEVSKCVKEWPGGRDVRA.

The EngB-type G domain maps to 21-196 (QVPEVAFAGR…VHEVSKCVKE (176 aa)). Residues 29–36 (GRSNVGKS), 56–60 (GSTRQ), 74–77 (DLPG), 141–144 (TKID), and 172–177 (IIGTSS) contribute to the GTP site. Mg(2+) is bound by residues S36 and T58.

It belongs to the TRAFAC class TrmE-Era-EngA-EngB-Septin-like GTPase superfamily. EngB GTPase family. Requires Mg(2+) as cofactor.

Necessary for normal cell division and for the maintenance of normal septation. The sequence is that of Probable GTP-binding protein EngB from Anaplasma marginale (strain Florida).